The sequence spans 340 residues: Glycerol-3-phosphate dehydrogenase [NAD(P)+] (340 aa).

Serine 12, tryptophan 13, lysine 34, and lysine 107 together coordinate NADPH. Sn-glycerol 3-phosphate contacts are provided by lysine 107, glycine 138, and serine 140. Alanine 142 is a binding site for NADPH. Sn-glycerol 3-phosphate contacts are provided by lysine 193, aspartate 246, serine 256, arginine 257, and asparagine 258. The active-site Proton acceptor is lysine 193. NADPH is bound at residue arginine 257. Residues isoleucine 281 and glutamate 283 each contribute to the NADPH site.

It belongs to the NAD-dependent glycerol-3-phosphate dehydrogenase family.

The protein resides in the cytoplasm. It catalyses the reaction sn-glycerol 3-phosphate + NAD(+) = dihydroxyacetone phosphate + NADH + H(+). The catalysed reaction is sn-glycerol 3-phosphate + NADP(+) = dihydroxyacetone phosphate + NADPH + H(+). It functions in the pathway membrane lipid metabolism; glycerophospholipid metabolism. Functionally, catalyzes the reduction of the glycolytic intermediate dihydroxyacetone phosphate (DHAP) to sn-glycerol 3-phosphate (G3P), the key precursor for phospholipid synthesis. The sequence is that of Glycerol-3-phosphate dehydrogenase [NAD(P)+] from Enterococcus faecalis (strain ATCC 700802 / V583).